A 357-amino-acid polypeptide reads, in one-letter code: MEITWEKPKSSSHHRNPSFSSTLLDQIYRSIDDSSPPPPLESIKKKKHHHQQRNASLHEDREISPIYHRRSIAADFERSRRKTDFLRHSNSSSSDSSGFSSSESDSFHGRSKSSASPPSSSRQQPKPIRTSSVDHSSAVQKPKELGGFLRTKSKALKIYSDLKKVKQPISPGGRLATFLNSLFTNAATNPKKHKKTTTVAVVEEPHSSSTCSSASSFSRSCLSKTPSSSGKSKRSVRFCPVNVILDEDSSFTMPYAYNNERLYDNNEAKRVEEHRRVIQAAKDLLRTYHNKNKVTTTNINNVEEDDEDDAASCASSDLFELENLSAIGIERYREELPVYETTRLDNMNRVIATGLIV.

2 disordered regions span residues Met-1–Gly-146 and Ser-208–Lys-233. Residues Asp-75–Arg-87 are compositionally biased toward basic and acidic residues. Low complexity-rich tracts occupy residues His-88–Ser-104 and Lys-112–Pro-127. Over residues Arg-129–Val-139 the composition is skewed to polar residues. Positions Ser-208–Ser-223 are enriched in low complexity.

This sequence belongs to the BIG GRAIN 1 (BG1) plant protein family.

It localises to the cell membrane. Its function is as follows. Involved in auxin transport. Regulator of the auxin signaling pathway. The protein is Protein BIG GRAIN 1-like A of Arabidopsis thaliana (Mouse-ear cress).